Reading from the N-terminus, the 502-residue chain is MTQVPPVTFQQYGPVITTSAGNPVDDNQNSVTAGPYGPAILSNFHLIDKLAHFDRERIPERVVHAKGGGAFGYFEVTHDITRFCKAKLFEKIGKRTPVFARFSTVAGESGSADTRRDPRGFALKFYTEEGNWDMVGNNTPIFFVRDAIKFPDFIHTQKRHPQTHLHDPNMVWDFFSLVPESVHQVTFLYTDRGTPDGFRHMNGYGSHTFKFINKDNEAFYVKWHFKTNQGIKNLNRQRAKELESEDPDYAVRDLFNAIAKREFPSWTFCIQVMPLKDAETYKWNVFDVTKVWPHGDYPLIPVGKLVLDRNPENYFQDVEQAAFAPAHMVPGIEPSEDRMLQGRMFSYIDTHRHRLGANYHQIPVNRPWNARGGDYSVRDGPMCVDGNKGSQLNYEPNSVDGFPKEDRNAAVSGTTTVSGTVACHPQEHPNSDFEQPGNFYRTVLSEPEREALIGNIAEHLRQARRDIQERQVKIFYKCDPEYGERVARAIGLPTAACYPAKM.

Active-site residues include H64 and N137. Y347 provides a ligand contact to heme. A Microbody targeting signal motif is present at residues 500-502 (AKM).

Belongs to the catalase family. The cofactor is heme.

The protein localises to the peroxisome matrix. The enzyme catalyses 2 H2O2 = O2 + 2 H2O. Catalyzes the degradation of hydrogen peroxide (H(2)O(2)) generated by peroxisomal oxidases to water and oxygen, thereby protecting cells from the toxic effects of hydrogen peroxide. This Toxoplasma gondii protein is Peroxisomal catalase.